Reading from the N-terminus, the 300-residue chain is Meiosis-specific cyclin crs1 (300 aa).

Residues 61-183 form the Cyclin N-terminal domain; sequence IIEQEKKGLT…VLALLNFDIY (123 aa).

This sequence belongs to the cyclin family. Cyclin AB subfamily.

The protein localises to the cytoplasm. It is found in the nucleus. Its function is as follows. Has a role in meiotic chromosome segregation. The sequence is that of Meiosis-specific cyclin crs1 (crs1) from Schizosaccharomyces pombe (strain 972 / ATCC 24843) (Fission yeast).